Consider the following 173-residue polypeptide: RNA pyrophosphohydrolase (173 aa).

In terms of domain architecture, Nudix hydrolase spans 11-164 (PYRRCVGVVV…KKHVYRKVVS (154 aa)). Positions 52 to 73 (GGIDEGEEPLDAACRELYEETG) match the Nudix box motif.

Belongs to the Nudix hydrolase family. RppH subfamily. Requires a divalent metal cation as cofactor.

Accelerates the degradation of transcripts by removing pyrophosphate from the 5'-end of triphosphorylated RNA, leading to a more labile monophosphorylated state that can stimulate subsequent ribonuclease cleavage. The protein is RNA pyrophosphohydrolase of Bartonella quintana (strain Toulouse) (Rochalimaea quintana).